A 353-amino-acid polypeptide reads, in one-letter code: MTIAAGRFTKEENDLFDIMDDWLRRDRFVFVGWSGLLLFPCAYFALGGWFTGTTFVTSWYTHGLASSYLEGCNFLTAAVSTPANSLAHSLLLLWGPEAQGDFTRWCQLGGLWTFVALHGAFGLIGFMLRQFELARSVQLRPYNAIAFSAPIAVFVSVFLIYPLGQSGWFFAPSFGVAAIFRFILFFQGFHNWTLNPFHMMGVAGVLGAALLCAIHGATVENTLFEDGDGANTFRAFNPTQAEETYSMVTANRFWSQIFGVAFSNKRWLHFFMLFVPVTGLWMSALGVVGLALNLRAYDFVSQEIRAAEDPEFETFYTKNILLNEGIRAWMAAQDQPHENLIFPEEVLPRGNAL.

An N-acetylthreonine modification is found at Thr2. Thr2 carries the post-translational modification Phosphothreonine. The chain crosses the membrane as a helical span at residues 41 to 61 (CAYFALGGWFTGTTFVTSWYT). Position 118 (His118) interacts with chlorophyll a. Residues 125–141 (GFMLRQFELARSVQLRP) traverse the membrane as a helical segment. The pheophytin a site is built by Gln130 and Asn143. The helical transmembrane segment at 153 to 166 (VFVSVFLIYPLGQS) threads the bilayer. Residue His198 coordinates chlorophyll a. The chain crosses the membrane as a helical span at residues 208–228 (AALLCAIHGATVENTLFEDGD). A plastoquinone-binding residues include His215 and Phe262. Position 215 (His215) interacts with Fe cation. His269 is a binding site for Fe cation. Residues 279-295 (GLWMSALGVVGLALNLR) form a helical membrane-spanning segment.

This sequence belongs to the reaction center PufL/M/PsbA/D family. PSII is composed of 1 copy each of membrane proteins PsbA, PsbB, PsbC, PsbD, PsbE, PsbF, PsbH, PsbI, PsbJ, PsbK, PsbL, PsbM, PsbT, PsbX, PsbY, PsbZ, Psb30/Ycf12, at least 3 peripheral proteins of the oxygen-evolving complex and a large number of cofactors. It forms dimeric complexes. Requires The D1/D2 heterodimer binds P680, chlorophylls that are the primary electron donor of PSII, and subsequent electron acceptors. It shares a non-heme iron and each subunit binds pheophytin, quinone, additional chlorophylls, carotenoids and lipids. There is also a Cl(-1) ion associated with D1 and D2, which is required for oxygen evolution. The PSII complex binds additional chlorophylls, carotenoids and specific lipids. as cofactor.

It localises to the plastid. The protein localises to the chloroplast thylakoid membrane. The catalysed reaction is 2 a plastoquinone + 4 hnu + 2 H2O = 2 a plastoquinol + O2. In terms of biological role, photosystem II (PSII) is a light-driven water:plastoquinone oxidoreductase that uses light energy to abstract electrons from H(2)O, generating O(2) and a proton gradient subsequently used for ATP formation. It consists of a core antenna complex that captures photons, and an electron transfer chain that converts photonic excitation into a charge separation. The D1/D2 (PsbA/PsbD) reaction center heterodimer binds P680, the primary electron donor of PSII as well as several subsequent electron acceptors. D2 is needed for assembly of a stable PSII complex. The sequence is that of Photosystem II D2 protein from Dioscorea elephantipes (Elephant's foot yam).